The sequence spans 192 residues: Ion-translocating oxidoreductase complex subunit A (192 aa).

A run of 6 helical transmembrane segments spans residues 5-25, 39-59, 67-87, 102-122, 134-154, and 171-191; these read ILLL…FLGL, IGMG…AYLV, LGIE…VVQF, LLGI…VALL, IIYG…FASM, and SIAM…TGLV.

It belongs to the NqrDE/RnfAE family. The complex is composed of six subunits: RnfA, RnfB, RnfC, RnfD, RnfE and RnfG.

The protein resides in the cell inner membrane. In terms of biological role, part of a membrane-bound complex that couples electron transfer with translocation of ions across the membrane. The chain is Ion-translocating oxidoreductase complex subunit A from Vibrio campbellii (strain ATCC BAA-1116).